We begin with the raw amino-acid sequence, 617 residues long: V-type proton ATPase catalytic subunit A (617 aa).

T136 carries the phosphothreonine modification. 250–257 contacts ATP; that stretch reads GAFGCGKT. S384 is modified (phosphoserine; by AMPK).

Belongs to the ATPase alpha/beta chains family. In terms of assembly, V-ATPase is a heteromultimeric enzyme made up of two complexes: the ATP-hydrolytic V1 complex and the proton translocation V0 complex. The V1 complex consists of three catalytic AB heterodimers that form a heterohexamer, three peripheral stalks each consisting of EG heterodimers, one central rotor including subunits D and F, and the regulatory subunits C and H. The proton translocation complex V0 consists of the proton transport subunit a, a ring of proteolipid subunits c9c'', rotary subunit d, subunits e and f, and the accessory subunits ATP6AP1/Ac45 and ATP6AP2/PRR. Interacts with the V0 complex V-ATPase subunit a4 ATP6V0A4. Interacts with WFS1. Interacts with alpha-crystallin B chain/CRYAB and with MTOR, forming a ternary complex. Phosphorylation at Ser-384 by AMPK down-regulates its enzyme activity.

The protein resides in the cytoplasm. The protein localises to the cytosol. Its subcellular location is the cytoplasmic vesicle. It localises to the secretory vesicle. It is found in the clathrin-coated vesicle membrane. The protein resides in the lysosome. The enzyme catalyses ATP + H2O + 4 H(+)(in) = ADP + phosphate + 5 H(+)(out). With respect to regulation, ATP hydrolysis occurs at the interface between the nucleotide-binding domains of subunits A and B. ATP hydrolysis triggers a conformational change in the subunits D and F, which induces a shift of subunit d. The c-ring is subsequently rotated and results in a continuous proton translocation across the membrane. Catalytic subunit of the V1 complex of vacuolar(H+)-ATPase (V-ATPase), a multisubunit enzyme composed of a peripheral complex (V1) that hydrolyzes ATP and a membrane integral complex (V0) that translocates protons. V-ATPase is responsible for acidifying and maintaining the pH of intracellular compartments and in some cell types, is targeted to the plasma membrane, where it is responsible for acidifying the extracellular environment. In aerobic conditions, involved in intracellular iron homeostasis, thus triggering the activity of Fe(2+) prolyl hydroxylase (PHD) enzymes, and leading to HIF1A hydroxylation and subsequent proteasomal degradation. May play a role in neurite development and synaptic connectivity. The sequence is that of V-type proton ATPase catalytic subunit A (ATP6V1A) from Sus scrofa (Pig).